Here is an 898-residue protein sequence, read N- to C-terminus: Tight junction protein ZO-3 (898 aa).

One can recognise a PDZ 1 domain in the interval 11 to 93 (TATLCRDPRR…LANITVKRPR (83 aa)). The segment at 98-165 (PATKAGTSGR…SPGGNSEANG (68 aa)) is disordered. Serine 128, serine 156, serine 161, serine 195, and serine 313 each carry phosphoserine. Residues 187 to 264 (SVLVRRTESE…KLTLLVLRDR (78 aa)) enclose the PDZ 2 domain. Residues 295–368 (LSQAVPSHVP…QSAEDRGYSP (74 aa)) are disordered. Residues 312-349 (RSLDSDGTDSPRDSPPLRRENSLDSRTISEPDAPRHSS) show a composition bias toward basic and acidic residues. Threonine 319 bears the Phosphothreonine mark. Phosphoserine occurs at positions 321 and 360. The PDZ 3 domain maps to 369-435 (DSRVVRFHKG…LTREEAVQFL (67 aa)). The region spanning 464–538 (GDSFYIRTHF…PNQSRAEQLA (75 aa)) is the SH3 domain. The Guanylate kinase-like domain maps to 569-750 (LRRGAKKSTQ…WYQELKAVVR (182 aa)). At serine 580 the chain carries Phosphoserine. Residues 759–898 (TAEDQLDNSS…GYDWGPATDL (140 aa)) form a disordered region. Residues 762–772 (DQLDNSSEDNL) show a composition bias toward acidic residues. Low complexity predominate over residues 780–790 (ADSSADLSCDS). The segment covering 796–814 (YETDGEGYTDGEGYTDVDE) has biased composition (acidic residues). The segment covering 831-841 (EEPRSPRDHGR) has biased composition (basic and acidic residues). A phosphoserine mark is found at serine 835, serine 884, and serine 885.

This sequence belongs to the MAGUK family. Heterodimer with TJP1. Interacts with UBN1. Interacts with occludin OCLN and claudins. Interacts with PATJ. Interacts with FASLG. Interacts with CCND1. Post-translationally, phosphorylated.

It is found in the cell membrane. It localises to the cell junction. The protein resides in the tight junction. The protein localises to the nucleus. In terms of biological role, TJP1, TJP2, and TJP3 are closely related scaffolding proteins that link tight junction (TJ) transmembrane proteins such as claudins, junctional adhesion molecules, and occludin to the actin cytoskeleton. The tight junction acts to limit movement of substances through the paracellular space and as a boundary between the compositionally distinct apical and basolateral plasma membrane domains of epithelial and endothelial cells. Binds and recruits PATJ to tight junctions where it connects and stabilizes apical and lateral components of tight junctions. Promotes cell-cycle progression through the sequestration of cyclin D1 (CCND1) at tight junctions during mitosis which prevents CCND1 degradation during M-phase and enables S-phase transition. With TJP1 and TJP2, participates in the junctional retention and stability of the transcription factor DBPA, but is not involved in its shuttling to the nucleus. Contrary to TJP2, TJP3 is dispensable for individual viability, embryonic development, epithelial differentiation, and the establishment of TJs, at least in the laboratory environment. In Canis lupus familiaris (Dog), this protein is Tight junction protein ZO-3 (TJP3).